We begin with the raw amino-acid sequence, 199 residues long: Probable adenine phosphoribosyltransferase (199 aa).

The protein belongs to the purine/pyrimidine phosphoribosyltransferase family. In terms of assembly, homodimer.

Its subcellular location is the cytoplasm. It carries out the reaction AMP + diphosphate = 5-phospho-alpha-D-ribose 1-diphosphate + adenine. It functions in the pathway purine metabolism; AMP biosynthesis via salvage pathway; AMP from adenine: step 1/1. In terms of biological role, catalyzes a salvage reaction resulting in the formation of AMP, that is energically less costly than de novo synthesis. The chain is Probable adenine phosphoribosyltransferase (aprt) from Dictyostelium discoideum (Social amoeba).